Consider the following 153-residue polypeptide: Actin-related protein 2/3 complex subunit 5-like protein (153 aa).

The residue at position 64 (S64) is a Phosphoserine.

The protein belongs to the ARPC5 family. May be a component of the Arp2/3 complex in which it may replace ARPC5.

It localises to the cytoplasm. It is found in the cytoskeleton. Its function is as follows. May function as component of the Arp2/3 complex which is involved in regulation of actin polymerization and together with an activating nucleation-promoting factor (NPF) mediates the formation of branched actin networks. In Rattus norvegicus (Rat), this protein is Actin-related protein 2/3 complex subunit 5-like protein (Arpc5l).